Here is a 192-residue protein sequence, read N- to C-terminus: Potassium-transporting ATPase KdpC subunit (192 aa).

The helical transmembrane segment at 7–27 threads the bilayer; that stretch reads PLIVIFAVLTAVTGLAYPAVM.

Belongs to the KdpC family. As to quaternary structure, the system is composed of three essential subunits: KdpA, KdpB and KdpC.

Its subcellular location is the cell inner membrane. Its function is as follows. Part of the high-affinity ATP-driven potassium transport (or Kdp) system, which catalyzes the hydrolysis of ATP coupled with the electrogenic transport of potassium into the cytoplasm. This subunit acts as a catalytic chaperone that increases the ATP-binding affinity of the ATP-hydrolyzing subunit KdpB by the formation of a transient KdpB/KdpC/ATP ternary complex. This chain is Potassium-transporting ATPase KdpC subunit, found in Paraburkholderia phytofirmans (strain DSM 17436 / LMG 22146 / PsJN) (Burkholderia phytofirmans).